A 240-amino-acid polypeptide reads, in one-letter code: Ribonuclease P protein component (240 aa).

The tract at residues methionine 1 to serine 140 is disordered. Positions alanine 40 to proline 51 are enriched in pro residues. The insert stretch occupies residues isoleucine 47 to lysine 123. A compositionally biased stretch (low complexity) spans serine 122–lysine 132.

The protein belongs to the RnpA family. Consists of a catalytic RNA component (M1 or rnpB) and a protein subunit.

The catalysed reaction is Endonucleolytic cleavage of RNA, removing 5'-extranucleotides from tRNA precursor.. In terms of biological role, RNaseP catalyzes the removal of the 5'-leader sequence from pre-tRNA to produce the mature 5'-terminus. It can also cleave other RNA substrates such as 4.5S RNA. The protein component plays an auxiliary but essential role in vivo by binding to the 5'-leader sequence and broadening the substrate specificity of the ribozyme. This Thermus filiformis protein is Ribonuclease P protein component.